The following is a 124-amino-acid chain: TP53-target gene 3 protein (124 aa).

Over residues 1-11 (MRASPCISQPA) the composition is skewed to polar residues. The segment at 1–42 (MRASPCISQPAASWHPRPSALRPTAGSGPDTRTPGTVEDGSA) is disordered.

In terms of tissue distribution, strongly expressed in testis. Weakly expressed in heart, placenta and skeletal muscle.

It localises to the cytoplasm. Its subcellular location is the nucleus. Functionally, may play a significant role in p53/TP53-mediating signaling pathway. The sequence is that of TP53-target gene 3 protein from Homo sapiens (Human).